The sequence spans 592 residues: Malic enzyme, hydrogenosomal (592 aa).

The N-terminal 27 residues, 1–27 (MLAPIQTIARPVSSILPATGALAAKRT), are a transit peptide targeting the hydrogenosome. Residue Tyr-134 is the Proton donor of the active site. Residue 182–205 (VTDGSRILGLGDLGAGGMQIPIGK) participates in NADP(+) binding. Position 187 (Arg-187) interacts with NAD(+). Residue Lys-205 is the Proton acceptor of the active site. 3 residues coordinate a divalent metal cation: Glu-276, Asp-277, and Asp-300. Asp-300 provides a ligand contact to NAD(+). Residue 335-352 (GAGSSGVGVCETIVDCIV) participates in NADP(+) binding. Asn-443 lines the NAD(+) pocket.

Belongs to the malic enzymes family. Mg(2+) serves as cofactor. Requires Mn(2+) as cofactor.

It is found in the hydrogenosome. The catalysed reaction is (S)-malate + NADP(+) = pyruvate + CO2 + NADPH. It carries out the reaction oxaloacetate + H(+) = pyruvate + CO2. The polypeptide is Malic enzyme, hydrogenosomal (Neocallimastix frontalis (Rumen fungus)).